Consider the following 221-residue polypeptide: Histone H1.3 (221 aa).

Low complexity predominate over residues 1–17 (MSETAPVAPAAPAPAEK). Residues 1 to 42 (MSETAPVAPAAPAPAEKTPVKKKAKKSGVAAGKRKASGPPVS) form a disordered region. An N-acetylserine modification is found at serine 2. Serine 2 is modified (phosphoserine). Lysine 17 bears the N6-acetyllysine mark. The residue at position 18 (threonine 18) is a Phosphothreonine. Residues 20-36 (VKKKAKKSGVAAGKRKA) show a composition bias toward basic residues. Residues lysine 35 and lysine 53 each carry the N6-(beta-hydroxybutyryl)lysine modification. One can recognise an H15 domain in the interval 37-110 (SGPPVSELIT…GASGSFKLNK (74 aa)). Arginine 55 carries the citrulline modification. Residues lysine 65, lysine 86, and lysine 91 each carry the N6-(beta-hydroxybutyryl)lysine modification. The interval 87–221 (SLVSKGTLVQ…KAKKAVSKKK (135 aa)) is disordered. The residue at position 105 (serine 105) is a Phosphoserine; by PKC. Lysine 107 is subject to N6-(beta-hydroxybutyryl)lysine. 4 stretches are compositionally biased toward basic residues: residues 120–141 (KGKKAGAAKPKKAAGAAKKPKK), 150–161 (KAAKKTPKKVKK), 170–187 (KVAKSPKKAKAAKPKKPT), and 194–221 (KAPKPKAAKPKAAKPKATKAKKAVSKKK).

This sequence belongs to the histone H1/H5 family. In terms of processing, H1 histones are progressively phosphorylated during the cell cycle, becoming maximally phosphorylated during late G2 phase and M phase, and being dephosphorylated sharply thereafter. Post-translationally, citrullination at Arg-55 (H1R54ci) by PADI4 takes place within the DNA-binding site of H1 and results in its displacement from chromatin and global chromatin decondensation, thereby promoting pluripotency and stem cell maintenance.

It localises to the nucleus. It is found in the chromosome. Functionally, H1 histones bind to linker DNA between nucleosomes forming the macromolecular structure known as the chromatin fiber. H1 histones are necessary for the condensation of nucleosome chains into higher-order structured fibers. Also acts as a regulator of individual gene transcription through chromatin remodeling, nucleosome spacing and DNA methylation. The chain is Histone H1.3 from Bos taurus (Bovine).